Here is a 209-residue protein sequence, read N- to C-terminus: Large ribosomal subunit protein uL4 (209 aa).

The tract at residues 45–78 (RQGTHKAKERAEVAGSTRKIKKQKGTGTARAGSA) is disordered.

The protein belongs to the universal ribosomal protein uL4 family. Part of the 50S ribosomal subunit.

Its function is as follows. One of the primary rRNA binding proteins, this protein initially binds near the 5'-end of the 23S rRNA. It is important during the early stages of 50S assembly. It makes multiple contacts with different domains of the 23S rRNA in the assembled 50S subunit and ribosome. In terms of biological role, forms part of the polypeptide exit tunnel. The protein is Large ribosomal subunit protein uL4 of Flavobacterium psychrophilum (strain ATCC 49511 / DSM 21280 / CIP 103535 / JIP02/86).